Consider the following 169-residue polypeptide: Sorting nexin-24 (169 aa).

Methionine 1 bears the N-acetylmethionine mark. Positions 1–125 (MEVYIPSFRY…SFDETESEES (125 aa)) constitute a PX domain. Residues arginine 38, serine 40, lysine 61, and arginine 74 each contribute to the a 1,2-diacyl-sn-glycero-3-phospho-(1D-myo-inositol-3-phosphate) site. A phosphoserine mark is found at serine 113 and serine 116.

Belongs to the sorting nexin family.

The protein resides in the cytoplasmic vesicle membrane. Functionally, may be involved in several stages of intracellular trafficking. This Bos taurus (Bovine) protein is Sorting nexin-24 (SNX24).